A 130-amino-acid chain; its full sequence is Small ribosomal subunit protein uS11 (130 aa).

Belongs to the universal ribosomal protein uS11 family. Part of the 30S ribosomal subunit. Interacts with proteins S7 and S18. Binds to IF-3.

Located on the platform of the 30S subunit, it bridges several disparate RNA helices of the 16S rRNA. Forms part of the Shine-Dalgarno cleft in the 70S ribosome. This is Small ribosomal subunit protein uS11 from Sulfurimonas denitrificans (strain ATCC 33889 / DSM 1251) (Thiomicrospira denitrificans (strain ATCC 33889 / DSM 1251)).